Consider the following 254-residue polypeptide: Ribosomal RNA small subunit methyltransferase G (254 aa).

The interval 84–109 (NTESKTSLNNAETKNTNEALLTSEPF) is insert. S-adenosyl-L-methionine-binding positions include Gly115, Phe120, 171–172 (AE), and Arg185.

The protein belongs to the methyltransferase superfamily. RNA methyltransferase RsmG family.

The protein localises to the cytoplasm. In terms of biological role, specifically methylates the N7 position of a guanine in 16S rRNA. This Treponema denticola (strain ATCC 35405 / DSM 14222 / CIP 103919 / JCM 8153 / KCTC 15104) protein is Ribosomal RNA small subunit methyltransferase G.